The following is a 164-amino-acid chain: Lipoprotein signal peptidase (164 aa).

A run of 3 helical transmembrane segments spans residues 12 to 32, 70 to 90, and 102 to 122; these read WLWL…LILQ, WFFA…MYRS, and ALII…GFVV. Catalysis depends on residues Asp-123 and Asp-141. The helical transmembrane segment at 137–157 threads the bilayer; sequence FNLADTAICVGAALIVLEGFL.

It belongs to the peptidase A8 family.

It is found in the cell inner membrane. The enzyme catalyses Release of signal peptides from bacterial membrane prolipoproteins. Hydrolyzes -Xaa-Yaa-Zaa-|-(S,diacylglyceryl)Cys-, in which Xaa is hydrophobic (preferably Leu), and Yaa (Ala or Ser) and Zaa (Gly or Ala) have small, neutral side chains.. It participates in protein modification; lipoprotein biosynthesis (signal peptide cleavage). In terms of biological role, this protein specifically catalyzes the removal of signal peptides from prolipoproteins. This is Lipoprotein signal peptidase from Escherichia coli O9:H4 (strain HS).